Reading from the N-terminus, the 386-residue chain is Ribonuclease D (386 aa).

One can recognise a 3'-5' exonuclease domain in the interval histidine 3–leucine 174. Positions serine 213–glutamate 294 constitute an HRDC domain.

This sequence belongs to the RNase D family. A divalent metal cation is required as a cofactor.

Its subcellular location is the cytoplasm. It carries out the reaction Exonucleolytic cleavage that removes extra residues from the 3'-terminus of tRNA to produce 5'-mononucleotides.. Exonuclease involved in the 3' processing of various precursor tRNAs. Initiates hydrolysis at the 3'-terminus of an RNA molecule and releases 5'-mononucleotides. This Jannaschia sp. (strain CCS1) protein is Ribonuclease D.